A 347-amino-acid polypeptide reads, in one-letter code: Haptoglobin (347 aa).

The N-terminal stretch at 1–18 (MSALGAVIALLLWGQLFA) is a signal peptide. A Sushi domain is found at 31–88 (DGCPKPPQIAHGYVEHSVRYQCKNYYRLRTEGDGVYTLNSEKQWINKAVGDKLPECEA). 4 cysteine pairs are disulfide-bonded: cysteine 52-cysteine 86, cysteine 90-cysteine 207, cysteine 250-cysteine 281, and cysteine 292-cysteine 322. The Peptidase S1 domain occupies 103–347 (ILGGHLDAKG…DWVQKTIAKN (245 aa)). Asparagine 125, asparagine 148, asparagine 152, and asparagine 182 each carry an N-linked (GlcNAc...) asparagine glycan. The segment at 259-264 (VPEKKT) is interaction with CD163.

Belongs to the peptidase S1 family. In terms of assembly, tetramer of two alpha and two beta chains; disulfide-linked. The hemoglobin/haptoglobin complex is composed of a haptoglobin dimer bound to two hemoglobin alpha-beta dimers. Interacts with CD163. Interacts with ERGIC3.

It is found in the secreted. In terms of biological role, as a result of hemolysis, hemoglobin is found to accumulate in the kidney and is secreted in the urine. Haptoglobin captures, and combines with free plasma hemoglobin to allow hepatic recycling of heme iron and to prevent kidney damage. Haptoglobin also acts as an antioxidant, has antibacterial activity and plays a role in modulating many aspects of the acute phase response. Hemoglobin/haptoglobin complexes are rapidly cleared by the macrophage CD163 scavenger receptor expressed on the surface of liver Kupfer cells through an endocytic lysosomal degradation pathway. The protein is Haptoglobin (HP) of Pongo abelii (Sumatran orangutan).